A 779-amino-acid polypeptide reads, in one-letter code: Beta-galactosidase 15 (779 aa).

The first 19 residues, 1–19 (MVSLSFILCCVLVSSCAYA), serve as a signal peptide directing secretion. The N-linked (GlcNAc...) asparagine glycan is linked to Asn-148. The active-site Proton donor is Glu-178. The active-site Nucleophile is Glu-247. N-linked (GlcNAc...) asparagine glycans are attached at residues Asn-248, Asn-345, Asn-374, Asn-489, Asn-495, and Asn-555. The SUEL-type lectin domain occupies 694 to 779 (VYEKNVLELS…AKRLAVEAIC (86 aa)).

This sequence belongs to the glycosyl hydrolase 35 family. As to expression, ubiquitous, with higher levels in roots and siliques.

The protein resides in the secreted. Its subcellular location is the extracellular space. The protein localises to the apoplast. The catalysed reaction is Hydrolysis of terminal non-reducing beta-D-galactose residues in beta-D-galactosides.. This is Beta-galactosidase 15 (BGAL15) from Arabidopsis thaliana (Mouse-ear cress).